A 595-amino-acid polypeptide reads, in one-letter code: NADH-quinone oxidoreductase subunit C/D (595 aa).

The NADH dehydrogenase I subunit C stretch occupies residues 1–185 (MNKNICLSAS…NPFVLTKEKE (185 aa)). An NADH dehydrogenase I subunit D region spans residues 209–595 (DFMFLNFGPN…IDFVMSDVDR (387 aa)).

This sequence in the N-terminal section; belongs to the complex I 30 kDa subunit family. It in the C-terminal section; belongs to the complex I 49 kDa subunit family. As to quaternary structure, NDH-1 is composed of 13 different subunits. Subunits NuoB, CD, E, F, and G constitute the peripheral sector of the complex.

It localises to the cell inner membrane. The catalysed reaction is a quinone + NADH + 5 H(+)(in) = a quinol + NAD(+) + 4 H(+)(out). NDH-1 shuttles electrons from NADH, via FMN and iron-sulfur (Fe-S) centers, to quinones in the respiratory chain. The immediate electron acceptor for the enzyme in this species is believed to be ubiquinone. Couples the redox reaction to proton translocation (for every two electrons transferred, four hydrogen ions are translocated across the cytoplasmic membrane), and thus conserves the redox energy in a proton gradient. In Baumannia cicadellinicola subsp. Homalodisca coagulata, this protein is NADH-quinone oxidoreductase subunit C/D.